We begin with the raw amino-acid sequence, 366 residues long: tRNA pseudouridine synthase B (366 aa).

Residues 1–55 (MTVTTPDALLAPHDVQHAGADESAAQIRKPRDNNDPRNANRGGGNGKPRRDKRDV) are disordered. D92 acts as the Nucleophile in catalysis.

It belongs to the pseudouridine synthase TruB family. Type 1 subfamily.

It carries out the reaction uridine(55) in tRNA = pseudouridine(55) in tRNA. In terms of biological role, responsible for synthesis of pseudouridine from uracil-55 in the psi GC loop of transfer RNAs. The protein is tRNA pseudouridine synthase B of Rhodopseudomonas palustris (strain ATCC BAA-98 / CGA009).